Reading from the N-terminus, the 371-residue chain is Cytochrome b (371 aa).

The next 4 helical transmembrane spans lie at 25–45 (FGSMLLTCLALQVLTGFFLAV), 69–90 (WMMQNLHAIGASMFFICIYIHI), 105–125 (WMSGITLLITLMATAFFGYVL), and 170–190 (FFALHFILPFAIISLSSLHII). Heme b is bound by residues H75 and H89. Positions 174 and 188 each coordinate heme b. Residue H193 participates in a ubiquinone binding. The next 4 membrane-spanning stretches (helical) occupy residues 218 to 238 (HKDLLLLTLMMLSLLIIVSFF), 280 to 300 (LGGALALVMSIMILFTIPFTH), 312 to 332 (FSQLMFWTLVSTFITITWAAT), and 339 to 358 (FIVISQVTSTLYFTFFLLIP).

Belongs to the cytochrome b family. The cytochrome bc1 complex contains 3 respiratory subunits (MT-CYB, CYC1 and UQCRFS1), 2 core proteins (UQCRC1 and UQCRC2) and probably 6 low-molecular weight proteins. Heme b is required as a cofactor.

It is found in the mitochondrion inner membrane. Component of the ubiquinol-cytochrome c reductase complex (complex III or cytochrome b-c1 complex) that is part of the mitochondrial respiratory chain. The b-c1 complex mediates electron transfer from ubiquinol to cytochrome c. Contributes to the generation of a proton gradient across the mitochondrial membrane that is then used for ATP synthesis. The polypeptide is Cytochrome b (MT-CYB) (Leiopython albertisii (Northern white-lipped python)).